The following is a 348-amino-acid chain: Rhodopsin (348 aa).

Position 1 is an N-acetylmethionine (methionine 1). Residues 1–36 lie on the Extracellular side of the membrane; the sequence is MNGTEGPNFYVPFSNATGVVRSPFEYPQYYLAEPWQ. Asparagine 2 and asparagine 15 each carry an N-linked (GlcNAc...) asparagine glycan. Residues 37-61 traverse the membrane as a helical segment; it reads FSMLAAYMFLLIVLGFPINFLTLYV. At 62–73 the chain is on the cytoplasmic side; that stretch reads TVQHKKLRTPLN. The chain crosses the membrane as a helical span at residues 74 to 96; sequence YILLNLAVADLFMVFGGFTTTLY. At 97 to 110 the chain is on the extracellular side; the sequence is TSLHGYFVFGPTGC. Cysteine 110 and cysteine 187 form a disulfide bridge. Residues 111-133 form a helical membrane-spanning segment; that stretch reads NAEGFFATLGGEIALWSLVVLAI. Positions 134-136 match the 'Ionic lock' involved in activated form stabilization motif; sequence ERY. Over 134–152 the chain is Cytoplasmic; sequence ERYVVVCKPMSNFRFGENH. The chain crosses the membrane as a helical span at residues 153-173; sequence AIMGVAFTWVMALACAAPPLF. The Extracellular portion of the chain corresponds to 174 to 202; that stretch reads GWSRYIPEGLQCSCGIDYYTLKPEVNNES. Glutamate 201 contributes to the Zn(2+) binding site. The chain crosses the membrane as a helical span at residues 203-224; sequence FVIYMFVVHFTIPMIVIFFCYG. The Cytoplasmic portion of the chain corresponds to 225-252; the sequence is QLVFTVKEARAQQQESATTQKAEKEVTR. Residues 253-274 form a helical membrane-spanning segment; it reads MVIIMVIAFLICWVPYASVAFY. Topologically, residues 275–286 are extracellular; the sequence is IFTHQGSNFGPI. Glutamine 279 provides a ligand contact to Zn(2+). The helical transmembrane segment at 287–308 threads the bilayer; it reads FMTIPAFFAKSASIYNPVIYIM. Lysine 296 bears the N6-(retinylidene)lysine mark. The Cytoplasmic segment spans residues 309–348; that stretch reads MNKQFRNCMLTTICCGKNPLGDDEASATVSKTETSQVAPA. Residues cysteine 322 and cysteine 323 are each lipidated (S-palmitoyl cysteine). Residues 330–348 are interaction with SAG; it reads DDEASATVSKTETSQVAPA. At serine 334 the chain carries Phosphoserine. Position 336 is a phosphothreonine (threonine 336). The residue at position 338 (serine 338) is a Phosphoserine. Phosphothreonine occurs at positions 340 and 342. The residue at position 343 (serine 343) is a Phosphoserine.

It belongs to the G-protein coupled receptor 1 family. Opsin subfamily. In terms of assembly, homodimer. May form a complex composed of RHO, GRK1 and RCVRN in a Ca(2+)-dependent manner; RCVRN prevents the interaction between GRK1 and RHO. Interacts with GRK1. Interacts (phosphorylated form) with SAG. Interacts with GNAT1. Interacts with GNAT3. SAG and G-proteins compete for a common binding site. Interacts with PRCD; the interaction promotes PRCD stability. Forms a complex with ASAP1 and ARF4. Forms a complex with ASAP1, RAB11A, Rabin8/RAB3IP, ARF4 and RAB11FIP3; the complex regulates Golgi-to-cilia rhodopsin/RHO transport in photoreceptors. Phosphorylated on some or all of the serine and threonine residues present in the C-terminal region. In terms of processing, contains one covalently linked retinal chromophore. Upon light absorption, the covalently bound 11-cis-retinal is converted to all-trans-retinal. After hydrolysis of the Schiff base and release of the covalently bound all-trans-retinal, active rhodopsin is regenerated by binding of a fresh molecule of 11-cis-retinal.

It is found in the membrane. The protein localises to the cell projection. Its subcellular location is the cilium. It localises to the photoreceptor outer segment. In terms of biological role, photoreceptor required for image-forming vision at low light intensity. Required for photoreceptor cell viability after birth. Light-induced isomerization of 11-cis to all-trans retinal triggers a conformational change that activates signaling via G-proteins. Subsequent receptor phosphorylation mediates displacement of the bound G-protein alpha subunit by the arrestin SAG and terminates signaling. This is Rhodopsin (RHO) from Macaca fascicularis (Crab-eating macaque).